The chain runs to 92 residues: Small integral membrane protein 12 (92 aa).

The helical transmembrane segment at 12-34 threads the bilayer; the sequence is YAPYVTFPVAFVVGAVGYHLEWF.

This sequence belongs to the SMIM12 family.

The protein localises to the membrane. The protein is Small integral membrane protein 12 (SMIM12) of Bos taurus (Bovine).